A 129-amino-acid chain; its full sequence is Lysozyme C (129 aa).

The C-type lysozyme domain occupies 1–129 (KVYGRCELAA…VNAWTRGCRL (129 aa)). 4 disulfides stabilise this stretch: cysteine 6–cysteine 127, cysteine 30–cysteine 115, cysteine 64–cysteine 80, and cysteine 76–cysteine 94. Residues glutamate 35 and aspartate 52 contribute to the active site.

The protein belongs to the glycosyl hydrolase 22 family. In terms of assembly, monomer.

The protein resides in the secreted. The catalysed reaction is Hydrolysis of (1-&gt;4)-beta-linkages between N-acetylmuramic acid and N-acetyl-D-glucosamine residues in a peptidoglycan and between N-acetyl-D-glucosamine residues in chitodextrins.. Functionally, lysozymes have primarily a bacteriolytic function; those in tissues and body fluids are associated with the monocyte-macrophage system and enhance the activity of immunoagents. This Chrysolophus amherstiae (Lady Amherst's pheasant) protein is Lysozyme C (LYZ).